The sequence spans 269 residues: Hydroxyethylthiazole kinase (269 aa).

Position 42 (M42) interacts with substrate. Positions 118 and 164 each coordinate ATP. G191 is a binding site for substrate.

This sequence belongs to the Thz kinase family. Mg(2+) serves as cofactor.

It carries out the reaction 5-(2-hydroxyethyl)-4-methylthiazole + ATP = 4-methyl-5-(2-phosphooxyethyl)-thiazole + ADP + H(+). It functions in the pathway cofactor biosynthesis; thiamine diphosphate biosynthesis; 4-methyl-5-(2-phosphoethyl)-thiazole from 5-(2-hydroxyethyl)-4-methylthiazole: step 1/1. Catalyzes the phosphorylation of the hydroxyl group of 4-methyl-5-beta-hydroxyethylthiazole (THZ). The sequence is that of Hydroxyethylthiazole kinase from Listeria welshimeri serovar 6b (strain ATCC 35897 / DSM 20650 / CCUG 15529 / CIP 8149 / NCTC 11857 / SLCC 5334 / V8).